The sequence spans 635 residues: Interferon-induced GTP-binding protein Mx2 (635 aa).

A Dynamin-type G domain is found at 31–304; it reads DLALPAIAVI…LVQHIEKSMP (274 aa). The tract at residues 41–48 is G1 motif; it reads GDQSSGKS. Residue 41-48 coordinates GTP; sequence GDQSSGKS. The G2 motif stretch occupies residues 66 to 68; the sequence is VTR. Positions 142-145 are G3 motif; the sequence is DLPG. Residues 142 to 146 and 211 to 214 each bind GTP; these read DLPGI and TKPD. The interval 211-214 is G4 motif; that stretch reads TKPD. Residues 243–246 are G5 motif; it reads KCRG. One can recognise a GED domain in the interval 549–635; it reads LREMMLHLKS…MKAHNYLVEF (87 aa).

The protein belongs to the TRAFAC class dynamin-like GTPase superfamily. Dynamin/Fzo/YdjA family.

Its subcellular location is the nucleus. The protein resides in the cytoplasm. In terms of biological role, does not inhibit strain RB-1 of the fish pathogen, infectious hematopoietic necrosis virus (IHNV). In Oncorhynchus mykiss (Rainbow trout), this protein is Interferon-induced GTP-binding protein Mx2.